The sequence spans 124 residues: Holo-[acyl-carrier-protein] synthase (124 aa).

Mg(2+) contacts are provided by aspartate 5 and glutamate 56.

This sequence belongs to the P-Pant transferase superfamily. AcpS family. Mg(2+) is required as a cofactor.

The protein resides in the cytoplasm. The catalysed reaction is apo-[ACP] + CoA = holo-[ACP] + adenosine 3',5'-bisphosphate + H(+). In terms of biological role, transfers the 4'-phosphopantetheine moiety from coenzyme A to a Ser of acyl-carrier-protein. The chain is Holo-[acyl-carrier-protein] synthase from Campylobacter hominis (strain ATCC BAA-381 / DSM 21671 / CCUG 45161 / LMG 19568 / NCTC 13146 / CH001A).